Consider the following 251-residue polypeptide: NAD kinase (251 aa).

Residue D51 is the Proton acceptor of the active site. NAD(+)-binding positions include 51–52, K56, 113–114, K124, H140, D142, 153–158, and A177; these read DG, NE, and TGYSLS.

It belongs to the NAD kinase family. The cofactor is a divalent metal cation.

It is found in the cytoplasm. It catalyses the reaction NAD(+) + ATP = ADP + NADP(+) + H(+). In terms of biological role, involved in the regulation of the intracellular balance of NAD and NADP, and is a key enzyme in the biosynthesis of NADP. Catalyzes specifically the phosphorylation on 2'-hydroxyl of the adenosine moiety of NAD to yield NADP. The sequence is that of NAD kinase from Thermosipho melanesiensis (strain DSM 12029 / CIP 104789 / BI429).